A 350-amino-acid polypeptide reads, in one-letter code: Biotin synthase (350 aa).

One can recognise a Radical SAM core domain in the interval 54–278; the sequence is REIQLSTLLS…TMPQSYVRLS (225 aa). Residues Cys-69, Cys-73, and Cys-76 each contribute to the [4Fe-4S] cluster site. [2Fe-2S] cluster is bound by residues Cys-113, Cys-144, Cys-204, and Arg-276.

Belongs to the radical SAM superfamily. Biotin synthase family. As to quaternary structure, homodimer. The cofactor is [4Fe-4S] cluster. [2Fe-2S] cluster is required as a cofactor.

The catalysed reaction is (4R,5S)-dethiobiotin + (sulfur carrier)-SH + 2 reduced [2Fe-2S]-[ferredoxin] + 2 S-adenosyl-L-methionine = (sulfur carrier)-H + biotin + 2 5'-deoxyadenosine + 2 L-methionine + 2 oxidized [2Fe-2S]-[ferredoxin]. Its pathway is cofactor biosynthesis; biotin biosynthesis; biotin from 7,8-diaminononanoate: step 2/2. Its function is as follows. Catalyzes the conversion of dethiobiotin (DTB) to biotin by the insertion of a sulfur atom into dethiobiotin via a radical-based mechanism. In Neisseria meningitidis serogroup C / serotype 2a (strain ATCC 700532 / DSM 15464 / FAM18), this protein is Biotin synthase.